A 412-amino-acid polypeptide reads, in one-letter code: Peptidase T (412 aa).

Histidine 84 is a binding site for Zn(2+). The active site involves aspartate 86. Aspartate 146 is a Zn(2+) binding site. Catalysis depends on glutamate 179, which acts as the Proton acceptor. Zn(2+) contacts are provided by glutamate 180, aspartate 202, and histidine 385.

It belongs to the peptidase M20B family. It depends on Zn(2+) as a cofactor.

The protein resides in the cytoplasm. The enzyme catalyses Release of the N-terminal residue from a tripeptide.. Cleaves the N-terminal amino acid of tripeptides. The sequence is that of Peptidase T from Pasteurella multocida (strain Pm70).